A 464-amino-acid polypeptide reads, in one-letter code: Ribulose bisphosphate carboxylase/oxygenase activase A, chloroplastic (464 aa).

Residues 1–48 constitute a chloroplast transit peptide; the sequence is MAAAFSSTVGAPASTPTNFLGKKLKKQVTSAVNYHGKSSKANRFTVMA. 155 to 162 serves as a coordination point for ATP; it reads GGKGQGKS.

Belongs to the RuBisCO activase family.

The protein localises to the plastid. Its subcellular location is the chloroplast stroma. Functionally, activation of RuBisCO (ribulose-1,5-bisphosphate carboxylase/oxygenase; EC 4.1.1.39) involves the ATP-dependent carboxylation of the epsilon-amino group of lysine leading to a carbamate structure. This Hordeum vulgare (Barley) protein is Ribulose bisphosphate carboxylase/oxygenase activase A, chloroplastic (RCAA).